A 601-amino-acid chain; its full sequence is Putative pentatricopeptide repeat-containing protein At3g25060, mitochondrial (601 aa).

The transit peptide at 1–80 (MVQTKHFCML…KVFDELPQRG (80 aa)) directs the protein to the mitochondrion. 13 PPR repeats span residues 49 to 79 (GSSISRDLIASCGRIGEISYARKVFDELPQR), 80 to 114 (GVSVYNSMIVVYSRGKNPDEVLRLYDQMIAEKIQP), 115 to 149 (DSSTFTMTIKACLSGLVLEKGEAVWCKAVDFGYKN), 150 to 180 (DVFVCSSVLNLYMKCGKMDEAEVLFGKMAKR), 181 to 215 (DVICWTTMVTGFAQAGKSLKAVEFYREMQNEGFGR), 216 to 250 (DRVVMLGLLQASGDLGDTKMGRSVHGYLYRTGLPM), 251 to 281 (NVVVETSLVDMYAKVGFIEVASRVFSRMMFK), 282 to 316 (TAVSWGSLISGFAQNGLANKAFEAVVEMQSLGFQP), 317 to 347 (DLVTLVGVLVACSQVGSLKTGRLVHCYILKR), 351 to 381 (DRVTATALMDMYSKCGALSSSREIFEHVGRK), 382 to 416 (DLVCWNTMISCYGIHGNGQEVVSLFLKMTESNIEP), 417 to 452 (DHATFASLLSALSHSGLVEQGQHWFSVMINKYKIQP), and 453 to 487 (SEKHYVCLIDLLARAGRVEEALDMINSEKLDNALP). The tract at residues 488 to 563 (IWVALLSGCI…VPGYSAIEVN (76 aa)) is type E motif. The interval 564 to 594 (GELRTFLMEDLSHHEHYHMLQVLRNLKTEIR) is type E(+) motif.

The protein belongs to the PPR family. PCMP-E subfamily.

It is found in the mitochondrion. This chain is Putative pentatricopeptide repeat-containing protein At3g25060, mitochondrial (PCMP-E96), found in Arabidopsis thaliana (Mouse-ear cress).